A 195-amino-acid polypeptide reads, in one-letter code: Molybdenum cofactor guanylyltransferase (195 aa).

Residues 10-12, lysine 23, asparagine 51, aspartate 69, and aspartate 99 contribute to the GTP site; that span reads LAG. Aspartate 99 contributes to the Mg(2+) binding site.

This sequence belongs to the MobA family. Monomer. It depends on Mg(2+) as a cofactor.

It localises to the cytoplasm. It catalyses the reaction Mo-molybdopterin + GTP + H(+) = Mo-molybdopterin guanine dinucleotide + diphosphate. Functionally, transfers a GMP moiety from GTP to Mo-molybdopterin (Mo-MPT) cofactor (Moco or molybdenum cofactor) to form Mo-molybdopterin guanine dinucleotide (Mo-MGD) cofactor. This chain is Molybdenum cofactor guanylyltransferase, found in Histophilus somni (strain 2336) (Haemophilus somnus).